Here is a 232-residue protein sequence, read N- to C-terminus: Ribose-5-phosphate isomerase A (232 aa).

Substrate is bound by residues 28–31, 83–86, and 96–99; these read TGST, DGAD, and KGGG. The active-site Proton acceptor is Glu-105. Lys-123 is a binding site for substrate.

It belongs to the ribose 5-phosphate isomerase family. In terms of assembly, homodimer.

It carries out the reaction aldehydo-D-ribose 5-phosphate = D-ribulose 5-phosphate. It functions in the pathway carbohydrate degradation; pentose phosphate pathway; D-ribose 5-phosphate from D-ribulose 5-phosphate (non-oxidative stage): step 1/1. In terms of biological role, catalyzes the reversible conversion of ribose-5-phosphate to ribulose 5-phosphate. This is Ribose-5-phosphate isomerase A from Rhizobium etli (strain ATCC 51251 / DSM 11541 / JCM 21823 / NBRC 15573 / CFN 42).